The sequence spans 191 residues: UPF0312 protein Shewmr7_1249 (191 aa).

An N-terminal signal peptide occupies residues 1–22 (MKKQLLAALIGGFLLAPMAASA).

The protein belongs to the UPF0312 family. Type 1 subfamily.

Its subcellular location is the periplasm. The chain is UPF0312 protein Shewmr7_1249 from Shewanella sp. (strain MR-7).